We begin with the raw amino-acid sequence, 1128 residues long: Major DNA-binding protein (1128 aa).

The required for nuclear localization stretch occupies residues 1104–1128 (LGGGGQGSGGRRKRRLATVLPGLEV).

It belongs to the herpesviridae major DNA-binding protein family. As to quaternary structure, homooligomers. Forms double-helical filaments necessary for the formation of replication compartments within the host nucleus. Interacts with the origin-binding protein. Interacts with the helicase primase complex; this interaction stimulates primer synthesis activity of the helicase-primase complex. Interacts with the DNA polymerase. Interacts with the alkaline exonuclease; this interaction increases its nuclease processivity.

The protein resides in the virion tegument. It localises to the host nucleus. In terms of biological role, plays several crucial roles in viral infection. Participates in the opening of the viral DNA origin to initiate replication by interacting with the origin-binding protein. May disrupt loops, hairpins and other secondary structures present on ssDNA to reduce and eliminate pausing of viral DNA polymerase at specific sites during elongation. Promotes viral DNA recombination by performing strand-transfer, characterized by the ability to transfer a DNA strand from a linear duplex to a complementary single-stranded DNA circle. Can also catalyze the renaturation of complementary single strands. Additionally, reorganizes the host cell nucleus, leading to the formation of prereplicative sites and replication compartments. This process is driven by the protein which can form double-helical filaments in the absence of DNA. The protein is Major DNA-binding protein of Homo sapiens (Human).